A 197-amino-acid chain; its full sequence is Thymidylate kinase (197 aa).

7 to 14 (GIDGCGKS) serves as a coordination point for ATP.

Belongs to the thymidylate kinase family.

The catalysed reaction is dTMP + ATP = dTDP + ADP. Functionally, phosphorylation of dTMP to form dTDP in both de novo and salvage pathways of dTTP synthesis. This is Thymidylate kinase from Fervidobacterium nodosum (strain ATCC 35602 / DSM 5306 / Rt17-B1).